A 70-amino-acid polypeptide reads, in one-letter code: Homeobox protein OTX2 (70 aa).

The disordered stretch occupies residues 34–70 (HQLPGPGATLSPMGTNAVTSHLNQSPASLSTQGYGAS). Residues 45-70 (PMGTNAVTSHLNQSPASLSTQGYGAS) show a composition bias toward polar residues.

The protein belongs to the paired homeobox family. Bicoid subfamily.

The protein resides in the nucleus. Transcription factor probably involved in the development of the brain and the sense organs. Can bind to the bicoid/BCD target sequence (BTS): 5'-TCTAATCCC-3'. The protein is Homeobox protein OTX2 (Otx2) of Rattus norvegicus (Rat).